Consider the following 495-residue polypeptide: Bile acid-sensitive ion channel (495 aa).

The tract at residues 1 to 30 is binds the plasma membrane and stabilizes the channel in the closed state; it reads MEHTEKSQVHAEKGLLGKIKRYLSKRPLPS. Residues 1–61 are Cytoplasmic-facing; the sequence is MEHTEKSQVH…NIAQNQNKVR (61 aa). A helical membrane pass occupies residues 62-82; sequence KVIWLAVVLGSVSLLVWQIYS. Topologically, residues 83–459 are extracellular; the sequence is RLVNYFTWPT…GLFCGASLIT (377 aa). 6 disulfide bridges follow: cysteine 112/cysteine 207, cysteine 185/cysteine 192, cysteine 298/cysteine 377, cysteine 315/cysteine 373, cysteine 328/cysteine 350, and cysteine 330/cysteine 342. N-linked (GlcNAc...) asparagine glycosylation is found at asparagine 147, asparagine 163, and asparagine 179. 3 N-linked (GlcNAc...) asparagine glycosylation sites follow: asparagine 370, asparagine 405, and asparagine 421. The GAS motif; ion selectivity filter motif lies at 454–456; the sequence is GAS. The chain crosses the membrane as a helical span at residues 460–480; sequence IIEIIEYFFTNFYWVLIFFLL. The Cytoplasmic segment spans residues 481–495; the sequence is KILETIQRTSPPQAV.

The protein belongs to the amiloride-sensitive sodium channel (TC 1.A.6) family. ASIC5 subfamily. In terms of assembly, forms homotrimeric channels. In terms of tissue distribution, expressed by cholangiocytes (at protein level). Detected in cerebellum, brainstem, kidney, liver, hepatocytes, lung, intestine and embryo. In the cerebellum, restricted to interneurons in the granular layer, specifically in GRM1-expressing unipolar brush cells of the vestibulocerebellum.

Its subcellular location is the apical cell membrane. The protein resides in the cell membrane. It catalyses the reaction Na(+)(in) = Na(+)(out). The enzyme catalyses Li(+)(in) = Li(+)(out). It carries out the reaction K(+)(in) = K(+)(out). The catalysed reaction is H(+)(in) = H(+)(out). Inhibited by the diuretic drug amiloride. Contrary to its rat ortholog it is not inhibited by Ca(2+). Forms bile acid-gated sodium channels and may play a role in bile acid-dependent absorption and secretion by epithelial cells of the bile ducts. Displays high selectivity for sodium ions but can also permit the permeation of other cations. The gating could be indirect and the consequence of alterations of the membrane environment of the channel by bile acids. As a sodium channel of type II unipolar brush cells of the vestibulocerebellum, controlling the electrical activity of these cells, could play a role in motor coordination and balance. In Mus musculus (Mouse), this protein is Bile acid-sensitive ion channel.